A 209-amino-acid polypeptide reads, in one-letter code: Chaperone protein TorD (209 aa).

It belongs to the TorD/DmsD family. TorD subfamily.

It localises to the cytoplasm. Functionally, involved in the biogenesis of TorA. Acts on TorA before the insertion of the molybdenum cofactor and, as a result, probably favors a conformation of the apoenzyme that is competent for acquiring the cofactor. The sequence is that of Chaperone protein TorD from Shewanella sp. (strain MR-4).